We begin with the raw amino-acid sequence, 397 residues long: Carnitine transport ATP-binding protein OpuCA (397 aa).

Positions 2–236 (LKFEHVTKTY…PANSFVEDFI (235 aa)) constitute an ABC transporter domain. Residue 35 to 42 (GPSGCGKT) coordinates ATP. 2 consecutive CBS domains span residues 255-311 (MNTN…ATSV) and 315-373 (IEKN…WGTL). Residues 377-397 (TENQEEQADSKTTEPEMKQEG) form a disordered region. The span at 384 to 397 (ADSKTTEPEMKQEG) shows a compositional bias: basic and acidic residues.

The protein belongs to the ABC transporter superfamily. The complex is composed of two ATP-binding proteins (OpuCA), two transmembrane proteins (OpuCB and OpuCD) and a solute-binding protein (OpuCC).

It carries out the reaction a quaternary ammonium(out) + ATP + H2O = a quaternary ammonium(in) + ADP + phosphate + H(+). Part of the ABC transporter complex OpuCABCD involved in carnitine uptake. Probably responsible for energy coupling to the transport system. Involved, with BetL and GbuABC, in osmoprotection and cryoprotection of Listeria. Can also mediate weak glycine betaine transport. This chain is Carnitine transport ATP-binding protein OpuCA (opuCA), found in Listeria monocytogenes serotype 1/2a (strain 10403S).